A 137-amino-acid polypeptide reads, in one-letter code: ATP synthase epsilon chain (137 aa).

It belongs to the ATPase epsilon chain family. As to quaternary structure, F-type ATPases have 2 components, CF(1) - the catalytic core - and CF(0) - the membrane proton channel. CF(1) has five subunits: alpha(3), beta(3), gamma(1), delta(1), epsilon(1). CF(0) has three main subunits: a, b and c.

It localises to the cellular thylakoid membrane. Produces ATP from ADP in the presence of a proton gradient across the membrane. The protein is ATP synthase epsilon chain of Trichodesmium erythraeum (strain IMS101).